The following is a 1334-amino-acid chain: Nck-associated protein 5-like (1334 aa).

Disordered regions lie at residues 1-28 (MSEAMDQPAGGPGNPRPGEGDDGSMEPG), 115-146 (LPQIPLTPLQPPSEPPASPSLSSTEGPAAPLP), 210-234 (TPWRPPGQGPGSPEPINGELCGPPQ), 266-316 (GEED…SPDT), and 349-711 (PLNG…MVPS). The segment at 1–139 (MSEAMDQPAG…PASPSLSSTE (139 aa)) is mediates interaction with CDK5RAP2 and is required for homodimerization and microtubule bundle formation. The stretch at 28-106 (GTCQELLHRL…NQMLSALFQQ (79 aa)) forms a coiled coil. The span at 122–132 (PLQPPSEPPAS) shows a compositional bias: pro residues. Over residues 358 to 372 (GQSSSPDQAPPQLSK) the composition is skewed to polar residues. Phosphoserine; by CDK1 occurs at positions 440, 451, 470, and 477. The span at 468–481 (SPSPGGPQLSPQLP) shows a compositional bias: low complexity. Residues 484–487 (SRIP) carry the (S/T)X(I/L)P motif 1 motif. Ser493, Ser496, and Ser498 each carry phosphoserine. Residues 519–547 (LPTSPSPCYTTPDSTQLRPPQSALSTTLS) are compositionally biased toward polar residues. Phosphoserine; by CDK1 occurs at positions 571 and 577. A compositionally biased stretch (polar residues) spans 638–649 (PGNSSKKPSQGS). The residue at position 659 (Thr659) is a Phosphothreonine. Positions 750 to 1146 (RVYSSHSMGA…SGTPSKNLPK (397 aa)) are mediates interaction with beta-tubulin and is required for microtubule bundle formation. Ser767 bears the Phosphoserine; by CDK1 mark. The tract at residues 782-884 (LAGALCPQVP…EGLAPHSAIE (103 aa)) is disordered. The span at 810–825 (SPHSSPTKLPSKSPTK) shows a compositional bias: low complexity. A (S/T)X(I/L)P motif 2 motif is present at residues 816–819 (TKLP). The (S/T)X(I/L)P motif 3; required for interaction with MAPRE1 signature appears at 926-929 (SKLP). Disordered stretches follow at residues 931-953 (LNRRTEATKNKEGAGGGSPLRRE), 986-1015 (KAYLSSRARPRPGGPAPGPNTGLGQVQGQL), and 1030-1183 (LNRV…VPGI). The span at 933–942 (RRTEATKNKE) shows a compositional bias: basic and acidic residues. Residues 956–994 (MEARKLEAESLNISKLMAKAEDLRRALEEEKAYLSSRAR) are a coiled coil. Residues 1033–1050 (VDGKELPSKSWREPKPEY) are compositionally biased toward basic and acidic residues. Residues 1079–1090 (GCGKPPGKPSSE) show a composition bias toward low complexity. Residues 1110–1122 (SHFTACGSLTRTL) show a composition bias toward polar residues. Over residues 1152-1167 (LDPPPGVPPARPPPLT) the composition is skewed to pro residues. Ser1194 bears the Phosphoserine mark. A compositionally biased stretch (low complexity) spans 1197–1206 (AFPALLPAAP). Positions 1197–1334 (AFPALLPAAP…DSLSSCGSQG (138 aa)) are disordered. The span at 1235–1247 (TFPNTRAAGSSSD) shows a compositional bias: polar residues. Over residues 1313 to 1334 (LETSESLSDSLYDSLSSCGSQG) the composition is skewed to low complexity.

As to quaternary structure, homodimer. Interacts with CDK5RAP2. Interacts with MAPRE1. Interacts with beta-tubulin. Post-translationally, CDK1/Cyclin B-dependent phosphorylation mediates its dissociation from centrosomes during mitosis.

It localises to the cytoplasm. The protein localises to the cytoskeleton. It is found in the microtubule organizing center. Its subcellular location is the centrosome. Functionally, regulates microtubule organization and stabilization. Promotes microtubule growth and bundling formation and stabilizes microtubules by increasing intense acetylation of microtubules. Both tubulin-binding and homodimer formation are required for NCKAP5L-mediated microtubule bundle formation. The protein is Nck-associated protein 5-like of Homo sapiens (Human).